The chain runs to 219 residues: Large ribosomal subunit protein uL3 (219 aa).

The protein belongs to the universal ribosomal protein uL3 family. As to quaternary structure, part of the 50S ribosomal subunit. Forms a cluster with proteins L14 and L19.

One of the primary rRNA binding proteins, it binds directly near the 3'-end of the 23S rRNA, where it nucleates assembly of the 50S subunit. This is Large ribosomal subunit protein uL3 from Salinispora tropica (strain ATCC BAA-916 / DSM 44818 / JCM 13857 / NBRC 105044 / CNB-440).